The sequence spans 197 residues: CASP-like protein 1B2 (197 aa).

Ala2 carries the N-acetylalanine modification. The Cytoplasmic portion of the chain corresponds to 2-17; it reads AREKIVVAGGSTKSWK. Residues 18-38 traverse the membrane as a helical segment; that stretch reads LLLGLRVFAFMATLAAAIVMS. At 39–69 the chain is on the extracellular side; it reads LNKETKTLVVATIGTLPIKATLTAKFQDTPA. The helical transmembrane segment at 70-90 threads the bilayer; that stretch reads FVFFVIANVMVSFHNLLMIVL. Over 91 to 106 the chain is Cytoplasmic; it reads QIFSRKLEYKGVRLLS. Residues 107–127 form a helical membrane-spanning segment; it reads IAILDMLNATLVSAAANAAVF. At 128–156 the chain is on the extracellular side; that stretch reads VAELGKNGNKHAKWNKVCDRFATYCDHGA. A helical transmembrane segment spans residues 157-177; it reads GALIAAFAGVILMLLVSSVSI. Residues 178–197 lie on the Cytoplasmic side of the membrane; sequence SRLLINSKHLSTTATTTAVV.

This sequence belongs to the Casparian strip membrane proteins (CASP) family. As to quaternary structure, homodimer and heterodimers.

It is found in the cell membrane. This chain is CASP-like protein 1B2, found in Arabidopsis lyrata subsp. lyrata (Lyre-leaved rock-cress).